The primary structure comprises 427 residues: 3-phosphoshikimate 1-carboxyvinyltransferase (427 aa).

3-phosphoshikimate-binding residues include Lys-23, Ser-24, and Arg-28. Lys-23 lines the phosphoenolpyruvate pocket. Residues Gly-97 and Arg-125 each contribute to the phosphoenolpyruvate site. 3-phosphoshikimate-binding residues include Ser-170, Ser-171, Gln-172, Ser-198, Asp-314, Asn-337, and Lys-341. Gln-172 serves as a coordination point for phosphoenolpyruvate. The active-site Proton acceptor is Asp-314. Residues Arg-345, Arg-387, and Lys-412 each contribute to the phosphoenolpyruvate site.

Belongs to the EPSP synthase family. Monomer.

The protein resides in the cytoplasm. It catalyses the reaction 3-phosphoshikimate + phosphoenolpyruvate = 5-O-(1-carboxyvinyl)-3-phosphoshikimate + phosphate. The protein operates within metabolic intermediate biosynthesis; chorismate biosynthesis; chorismate from D-erythrose 4-phosphate and phosphoenolpyruvate: step 6/7. Catalyzes the transfer of the enolpyruvyl moiety of phosphoenolpyruvate (PEP) to the 5-hydroxyl of shikimate-3-phosphate (S3P) to produce enolpyruvyl shikimate-3-phosphate and inorganic phosphate. This chain is 3-phosphoshikimate 1-carboxyvinyltransferase, found in Buchnera aphidicola subsp. Baizongia pistaciae (strain Bp).